Here is a 394-residue protein sequence, read N- to C-terminus: Outer membrane protein S1 (394 aa).

Residues 1–21 (MNRKVLALLVPALLVAGAANA) form the signal peptide. The disordered stretch occupies residues 222-242 (SSSDRSDNQVARGYGDGMNER).

The protein belongs to the Gram-negative porin family. Homotrimer.

The protein resides in the cell outer membrane. Forms pores that allow passive diffusion of small molecules across the outer membrane. The polypeptide is Outer membrane protein S1 (ompS1) (Salmonella typhi).